The primary structure comprises 177 residues: ATP synthase subunit delta (177 aa).

Belongs to the ATPase delta chain family. As to quaternary structure, F-type ATPases have 2 components, F(1) - the catalytic core - and F(0) - the membrane proton channel. F(1) has five subunits: alpha(3), beta(3), gamma(1), delta(1), epsilon(1). F(0) has three main subunits: a(1), b(2) and c(10-14). The alpha and beta chains form an alternating ring which encloses part of the gamma chain. F(1) is attached to F(0) by a central stalk formed by the gamma and epsilon chains, while a peripheral stalk is formed by the delta and b chains.

It is found in the cell inner membrane. In terms of biological role, f(1)F(0) ATP synthase produces ATP from ADP in the presence of a proton or sodium gradient. F-type ATPases consist of two structural domains, F(1) containing the extramembraneous catalytic core and F(0) containing the membrane proton channel, linked together by a central stalk and a peripheral stalk. During catalysis, ATP synthesis in the catalytic domain of F(1) is coupled via a rotary mechanism of the central stalk subunits to proton translocation. This protein is part of the stalk that links CF(0) to CF(1). It either transmits conformational changes from CF(0) to CF(1) or is implicated in proton conduction. The sequence is that of ATP synthase subunit delta from Leptothrix cholodnii (strain ATCC 51168 / LMG 8142 / SP-6) (Leptothrix discophora (strain SP-6)).